The sequence spans 336 residues: N-acetylornithine carbamoyltransferase (336 aa).

Residues 49–52 (SMRT), Trp-77, and Arg-112 each bind carbamoyl phosphate. Glu-144 provides a ligand contact to N(2)-acetyl-L-ornithine. 148 to 151 (HPCQ) is a binding site for carbamoyl phosphate. N(2)-acetyl-L-ornithine-binding residues include Lys-252 and Leu-295. Carbamoyl phosphate is bound at residue 294-295 (CL). An N6-carboxylysine modification is found at Lys-302. Arg-322 is a binding site for carbamoyl phosphate.

The protein belongs to the aspartate/ornithine carbamoyltransferase superfamily. AOTCase family. Homotrimer.

Its subcellular location is the cytoplasm. The enzyme catalyses N(2)-acetyl-L-ornithine + carbamoyl phosphate = N(2)-acetyl-L-citrulline + phosphate + H(+). It participates in amino-acid biosynthesis; L-arginine biosynthesis. Its activity is regulated as follows. Carboxylation at Lys-302 increases the catalytic activity of the enzyme. Catalyzes the transfer of the carbamoyl group from carbamoyl phosphate to the delta-amino group of N(2)-acetyl-L-ornithine to produce N(2)-acetyl-L-citrulline. This is a step in an alternative arginine biosynthesis pathway. The enzyme has no activity with ornithine. The polypeptide is N-acetylornithine carbamoyltransferase (Xylella fastidiosa (strain Temecula1 / ATCC 700964)).